A 532-amino-acid polypeptide reads, in one-letter code: UDP-N-acetylmuramoylalanine--D-glutamate ligase (532 aa).

Position 124 to 130 (124 to 130) interacts with ATP; it reads GSKGKSS.

It belongs to the MurCDEF family.

It is found in the cytoplasm. It catalyses the reaction UDP-N-acetyl-alpha-D-muramoyl-L-alanine + D-glutamate + ATP = UDP-N-acetyl-alpha-D-muramoyl-L-alanyl-D-glutamate + ADP + phosphate + H(+). It participates in cell wall biogenesis; peptidoglycan biosynthesis. Its function is as follows. Cell wall formation. Catalyzes the addition of glutamate to the nucleotide precursor UDP-N-acetylmuramoyl-L-alanine (UMA). This Treponema pallidum (strain Nichols) protein is UDP-N-acetylmuramoylalanine--D-glutamate ligase (murD).